The primary structure comprises 1096 residues: Inactive phospholipase C-like protein 1 (1096 aa).

The disordered stretch occupies residues 1-101 (MAEGAASREA…KKTVSFSSMP (101 aa)). Serine 48 is modified (phosphoserine). Over residues 49–60 (GVALPGAAGVPA) the composition is skewed to low complexity. Serine 78 is subject to Phosphoserine. The interval 83–222 (PSNQKCGGRK…NIWVSGLRYL (140 aa)) is interaction with PPP1C. At threonine 94 the chain carries Phosphothreonine. Threonine 94 carries the phosphothreonine; by PKA modification. Serine 96 carries the phosphoserine; by PKA modification. The PH domain maps to 114 to 224 (SFMQAGCELK…WVSGLRYLVS (111 aa)). The PI-PLC X-box domain occupies 399 to 543 (QDMTQPLSHY…LKNMIIVKGK (145 aa)). The interaction with GABA A beta subunit stretch occupies residues 544–568 (KLPSESDLLEGEVTDEDEEAEMSRR). The segment covering 550–563 (DLLEGEVTDEDEEA) has biased composition (acidic residues). Residues 550-569 (DLLEGEVTDEDEEAEMSRRM) are disordered. Phosphothreonine is present on threonine 557. Serine 570 is modified (phosphoserine). A PI-PLC Y-box domain is found at 586–702 (LSDLVSICKS…GYVLRPSIMR (117 aa)). The C2 domain occupies 702-831 (RDEVSYFSAN…PGYRHVPLRS (130 aa)). The stretch at 1040 to 1060 (DLLKNAKNEAVENIKQIQLAC) forms a coiled coil. The disordered stretch occupies residues 1067-1096 (KGPGGGSEAKGKRSLEAIEEKESSEENGKL). Over residues 1075 to 1096 (AKGKRSLEAIEEKESSEENGKL) the composition is skewed to basic and acidic residues. Serine 1080 carries the post-translational modification Phosphoserine.

In terms of assembly, interacts with PPP2CA, Ins(1,4,5)P3, Ins(1,4,5,6)P4 GABARAP, GABA receptor beta subunits, GABA receptor gamma-2 subunits and PPP1C. May form a ternary complex with GABA receptor beta subunit and GABARAP. The formation of a ternary complex with GABA receptor beta subunit and GABARAP could be the key step for facilitating the association of GABARAP with the GABA receptor gamma-2 subunit and to allow it to be transported at the right destination. In terms of processing, phosphorylated by the catalytic subunit of PKA. Phosphorylation of Thr-94 resulted in dissociation of PPP1C from PRIP1.

The protein localises to the cytoplasm. Functionally, involved in an inositol phospholipid-based intracellular signaling cascade. Shows no PLC activity to phosphatidylinositol 4,5-bisphosphate and phosphatidylinositol. Component in the phospho-dependent endocytosis process of GABA A receptor. Acts as an inhibitor of PPP1C. Involved in the assembly and/or the trafficking of gamma-2 subunit-containing GABA A receptors. This is Inactive phospholipase C-like protein 1 (Plcl1) from Mus musculus (Mouse).